The following is a 376-amino-acid chain: WD repeat-containing protein 86 (376 aa).

8 WD repeats span residues 13-52 (DHRG…CCAL), 55-94 (GHES…QVYR), 95-132 (GHTS…MSRE), 135-188 (GHRN…CHQT), 191-232 (GHTG…RVFR), 234-272 (HRGS…RTFT), 274-310 (HRRN…LRRV), and 313-350 (GHTF…GAPR).

This chain is WD repeat-containing protein 86 (WDR86), found in Homo sapiens (Human).